The sequence spans 151 residues: Probable calcium-binding protein CML31 (151 aa).

4 EF-hand domains span residues 14–42 (ALFA…TLGE), 44–79 (VSDE…AEVE), 84–119 (RRGT…LGSD), and 120–151 (QDID…MMNA). Residues Asp-20, Asp-22, Asp-24, Arg-26, Glu-31, Asp-57, Asp-59, Asp-61, and Glu-68 each coordinate Ca(2+). Positions 133, 135, 137, and 144 each coordinate Ca(2+).

Potential calcium sensor. The sequence is that of Probable calcium-binding protein CML31 (CML31) from Oryza sativa subsp. japonica (Rice).